The following is a 107-amino-acid chain: UPF0122 protein MYPE4850 (107 aa).

This sequence belongs to the UPF0122 family.

Functionally, might take part in the signal recognition particle (SRP) pathway. This is inferred from the conservation of its genetic proximity to ftsY/ffh. May be a regulatory protein. This chain is UPF0122 protein MYPE4850, found in Malacoplasma penetrans (strain HF-2) (Mycoplasma penetrans).